A 348-amino-acid polypeptide reads, in one-letter code: Inactive rhomboid-related protein 2 (348 aa).

The 36-residue stretch at 14–49 folds into the EF-hand domain; it reads IEASSWIRIFRAFDTDHDGLIQCEEMQKTIRDSTYS. Ca(2+) contacts are provided by aspartate 27, aspartate 29, aspartate 31, and glutamate 38. The next 7 helical transmembrane spans lie at 121 to 141, 177 to 197, 207 to 227, 229 to 249, 263 to 283, 290 to 310, and 323 to 343; these read PPIF…YYVV, LINV…AIGV, IYIL…ALDP, VFLC…ITTI, LPIL…QRFF, VSMY…FILF, and FWVS…LIAA.

It belongs to the peptidase S54 family.

The protein localises to the membrane. Its function is as follows. Probable inactive serine protease. In Caenorhabditis elegans, this protein is Inactive rhomboid-related protein 2.